The chain runs to 171 residues: Transcription elongation factor GreB (171 aa).

The stretch at 53–75 forms a coiled coil; sequence KKRLREIDRRVRFLAKRLEVLKI.

It belongs to the GreA/GreB family. GreB subfamily.

In terms of biological role, necessary for efficient RNA polymerase transcription elongation past template-encoded arresting sites. The arresting sites in DNA have the property of trapping a certain fraction of elongating RNA polymerases that pass through, resulting in locked ternary complexes. Cleavage of the nascent transcript by cleavage factors such as GreA or GreB allows the resumption of elongation from the new 3'terminus. GreB releases sequences of up to 9 nucleotides in length. The polypeptide is Transcription elongation factor GreB (Yersinia pestis).